The primary structure comprises 191 residues: UPF0312 protein Sbal195_3198 (191 aa).

Residues 1–22 (MKKQLFSALIGASLLAPMAASA) form the signal peptide.

It belongs to the UPF0312 family. Type 1 subfamily.

The protein localises to the periplasm. In Shewanella baltica (strain OS195), this protein is UPF0312 protein Sbal195_3198.